The following is a 284-amino-acid chain: 4-diphosphocytidyl-2-C-methyl-D-erythritol kinase (284 aa).

Lys14 is a catalytic residue. Residue 98–108 (PMGGGLGGGSS) coordinates ATP. Residue Asp140 is part of the active site.

It belongs to the GHMP kinase family. IspE subfamily.

It carries out the reaction 4-CDP-2-C-methyl-D-erythritol + ATP = 4-CDP-2-C-methyl-D-erythritol 2-phosphate + ADP + H(+). It functions in the pathway isoprenoid biosynthesis; isopentenyl diphosphate biosynthesis via DXP pathway; isopentenyl diphosphate from 1-deoxy-D-xylulose 5-phosphate: step 3/6. Functionally, catalyzes the phosphorylation of the position 2 hydroxy group of 4-diphosphocytidyl-2C-methyl-D-erythritol. This Shewanella sp. (strain W3-18-1) protein is 4-diphosphocytidyl-2-C-methyl-D-erythritol kinase.